Consider the following 196-residue polypeptide: Peptidyl-tRNA hydrolase (196 aa).

Position 21 (Y21) interacts with tRNA. Catalysis depends on H26, which acts as the Proton acceptor. Residues F72, N74, and N120 each coordinate tRNA.

It belongs to the PTH family. In terms of assembly, monomer.

It is found in the cytoplasm. It catalyses the reaction an N-acyl-L-alpha-aminoacyl-tRNA + H2O = an N-acyl-L-amino acid + a tRNA + H(+). Functionally, hydrolyzes ribosome-free peptidyl-tRNAs (with 1 or more amino acids incorporated), which drop off the ribosome during protein synthesis, or as a result of ribosome stalling. In terms of biological role, catalyzes the release of premature peptidyl moieties from peptidyl-tRNA molecules trapped in stalled 50S ribosomal subunits, and thus maintains levels of free tRNAs and 50S ribosomes. This Mycobacteroides abscessus (strain ATCC 19977 / DSM 44196 / CCUG 20993 / CIP 104536 / JCM 13569 / NCTC 13031 / TMC 1543 / L948) (Mycobacterium abscessus) protein is Peptidyl-tRNA hydrolase.